Here is a 201-residue protein sequence, read N- to C-terminus: IMP cyclohydrolase (201 aa).

This sequence belongs to the archaeal IMP cyclohydrolase family.

It catalyses the reaction IMP + H2O = 5-formamido-1-(5-phospho-D-ribosyl)imidazole-4-carboxamide. It functions in the pathway purine metabolism; IMP biosynthesis via de novo pathway; IMP from 5-formamido-1-(5-phospho-D-ribosyl)imidazole-4-carboxamide: step 1/1. Catalyzes the cyclization of 5-formylamidoimidazole-4-carboxamide ribonucleotide to IMP. In Methanococcus maripaludis (strain C7 / ATCC BAA-1331), this protein is IMP cyclohydrolase.